The following is a 362-amino-acid chain: L-asparaginase 2-1 (362 aa).

The signal sequence occupies residues 1–25 (MRSLNTLLLSLFVAMSSGAPLLKIR). A glycan (N-linked (GlcNAc...) asparagine) is linked at Asn-29. Residues 33 to 359 (PSIKIFGTGG…DQIRSVFSGV (327 aa)) enclose the Asparaginase/glutaminase domain. The active-site O-isoaspartyl threonine intermediate is Thr-43. Position 89 (Ser-89) interacts with substrate. The N-linked (GlcNAc...) asparagine glycan is linked to Asn-93. 122–123 (TD) provides a ligand contact to substrate. Asn-239 carries an N-linked (GlcNAc...) asparagine glycan.

The protein belongs to the asparaginase 1 family.

Its subcellular location is the secreted. It is found in the periplasm. The catalysed reaction is L-asparagine + H2O = L-aspartate + NH4(+). This chain is L-asparaginase 2-1 (ASP3-1), found in Saccharomyces cerevisiae (strain ATCC 204508 / S288c) (Baker's yeast).